A 495-amino-acid polypeptide reads, in one-letter code: Probable aminotransferase ACS12 (495 aa).

Lysine 334 bears the N6-(pyridoxal phosphate)lysine mark.

Belongs to the class-I pyridoxal-phosphate-dependent aminotransferase family. As to quaternary structure, homodimer. The cofactor is pyridoxal 5'-phosphate. In terms of tissue distribution, expressed in roots. Expressed at low level in leaves, stems, flowers and siliques.

Functionally, probable aminotransferase. Does not have 1-aminocyclopropane-1-carboxylate synthase (ACS) activity, suggesting that it is not involved in ethylene biosynthesis. The chain is Probable aminotransferase ACS12 (ACS12) from Arabidopsis thaliana (Mouse-ear cress).